The chain runs to 226 residues: RING-H2 finger protein ATL75 (226 aa).

A helical membrane pass occupies residues 60–80; the sequence is LMLLSVLICGIICCLGLHYII. The RING-type; atypical zinc-finger motif lies at 136-178; sequence CVICLSDFVSGEQIRMLPKCHHGFHVRCIDKWLQQHLTCPKCR.

Belongs to the RING-type zinc finger family. ATL subfamily.

Its subcellular location is the membrane. The catalysed reaction is S-ubiquitinyl-[E2 ubiquitin-conjugating enzyme]-L-cysteine + [acceptor protein]-L-lysine = [E2 ubiquitin-conjugating enzyme]-L-cysteine + N(6)-ubiquitinyl-[acceptor protein]-L-lysine.. Its pathway is protein modification; protein ubiquitination. The chain is RING-H2 finger protein ATL75 (ATL75) from Arabidopsis thaliana (Mouse-ear cress).